We begin with the raw amino-acid sequence, 693 residues long: Protein-glutamine gamma-glutamyltransferase E (693 aa).

Y111 bears the Phosphotyrosine mark. The residue at position 112 (T112) is a Phosphothreonine. Residues A222, N225, N227, D228, and N230 each coordinate Ca(2+). C273 is an active-site residue. Ca(2+) is bound by residues D302, D304, N306, S308, and D325. Residues H331 and D354 contribute to the active site. N394, T416, E444, and E449 together coordinate Ca(2+). The segment at 457-483 (LDKLKPNASFGATSSRNPEGEDKEPSI) is disordered.

It belongs to the transglutaminase superfamily. Transglutaminase family. In terms of assembly, consists of two polypeptide chains, which are synthesized as a precursor form of a single polypeptide. The cofactor is Ca(2+). In terms of processing, activated by proteolytic processing. In vitro activation is commonly achieved by cleavage with dispase, a neutral bacterial protease. Physiological activation may be catalyzed by CTSL and, to a lesser extent, by CTSS. Expressed in skin and stomach and, at lower levels, in testis, kidney and spleen (at protein level). On the basis of its catalytic activity, detected in the epidermis, around the granular and spinous layers but not in the outermost cornified layers. In hair follicles, mainly located in the medulla and the hair cortex.

The protein resides in the cytoplasm. The catalysed reaction is L-glutaminyl-[protein] + L-lysyl-[protein] = [protein]-L-lysyl-N(6)-5-L-glutamyl-[protein] + NH4(+). In terms of biological role, catalyzes the calcium-dependent formation of isopeptide cross-links between glutamine and lysine residues in various proteins, as well as the conjugation of polyamines to proteins. Involved in the formation of the cornified envelope (CE), a specialized component consisting of covalent cross-links of proteins beneath the plasma membrane of terminally differentiated keratinocytes. Catalyzes small proline-rich proteins (SPRR1 and SPRR2) and LOR cross-linking to form small interchain oligomers, which are further cross-linked by TGM1 onto the growing CE scaffold. In hair follicles, involved in cross-linking structural proteins to hardening the inner root sheath. This is Protein-glutamine gamma-glutamyltransferase E (Tgm3) from Mus musculus (Mouse).